The chain runs to 538 residues: Cytochrome P450 monooxygenase claM (538 aa).

The helical transmembrane segment at 36–56 threads the bilayer; the sequence is LSIGLVVLIGAISSFLLQQFL. Residues asparagine 306 and asparagine 425 are each glycosylated (N-linked (GlcNAc...) asparagine). Cysteine 472 is a binding site for heme.

This sequence belongs to the cytochrome P450 family. It depends on heme as a cofactor.

It localises to the membrane. The catalysed reaction is 2 nataloe emodin + reduced [NADPH--hemoprotein reductase] + O2 = cladofulvin + oxidized [NADPH--hemoprotein reductase] + 2 H2O + H(+). The protein operates within pigment biosynthesis. Its function is as follows. Cytochrome P450 monooxygenase; part of the gene cluster that mediates the biosynthesis of the bianthraquinone cladofulvin, a conidial pigment not required for virulence but that plays a role in fitness and resistance to environmental stresses including UV light and low-temperature stress. The pathway begins with the synthesis of atrochrysone thioester by the polyketide synthase (PKS) claG. The atrochrysone carboxyl ACP thioesterase claF then breaks the thioester bond and releases the atrochrysone carboxylic acid from claG. This compound is decarboxylated by claH to yield emodin, which is further converted to chrysophanol hydroquinone by the reductase claC and the dehydratase claB. The cytochrome monooxygenase P450 claM then catalyzes the dimerization of nataloe-emodin to cladofulvin. The sequence is that of Cytochrome P450 monooxygenase claM from Passalora fulva (Tomato leaf mold).